A 126-amino-acid polypeptide reads, in one-letter code: Aspartate 1-decarboxylase (126 aa).

Serine 25 (schiff-base intermediate with substrate; via pyruvic acid) is an active-site residue. Pyruvic acid (Ser) is present on serine 25. Threonine 57 is a substrate binding site. The Proton donor role is filled by tyrosine 58. Substrate is bound at residue 73 to 75 (GGA).

Belongs to the PanD family. Heterooctamer of four alpha and four beta subunits. Pyruvate serves as cofactor. In terms of processing, is synthesized initially as an inactive proenzyme, which is activated by self-cleavage at a specific serine bond to produce a beta-subunit with a hydroxyl group at its C-terminus and an alpha-subunit with a pyruvoyl group at its N-terminus.

The protein resides in the cytoplasm. The enzyme catalyses L-aspartate + H(+) = beta-alanine + CO2. The protein operates within cofactor biosynthesis; (R)-pantothenate biosynthesis; beta-alanine from L-aspartate: step 1/1. Its function is as follows. Catalyzes the pyruvoyl-dependent decarboxylation of aspartate to produce beta-alanine. This is Aspartate 1-decarboxylase from Xylella fastidiosa (strain M12).